The following is a 153-amino-acid chain: D-aminoacyl-tRNA deacylase (153 aa).

A Gly-cisPro motif, important for rejection of L-amino acids motif is present at residues 142 to 143 (GP).

This sequence belongs to the DTD family. Homodimer.

Its subcellular location is the cytoplasm. It carries out the reaction glycyl-tRNA(Ala) + H2O = tRNA(Ala) + glycine + H(+). The catalysed reaction is a D-aminoacyl-tRNA + H2O = a tRNA + a D-alpha-amino acid + H(+). Functionally, an aminoacyl-tRNA editing enzyme that deacylates mischarged D-aminoacyl-tRNAs. Also deacylates mischarged glycyl-tRNA(Ala), protecting cells against glycine mischarging by AlaRS. Acts via tRNA-based rather than protein-based catalysis; rejects L-amino acids rather than detecting D-amino acids in the active site. By recycling D-aminoacyl-tRNA to D-amino acids and free tRNA molecules, this enzyme counteracts the toxicity associated with the formation of D-aminoacyl-tRNA entities in vivo and helps enforce protein L-homochirality. The chain is D-aminoacyl-tRNA deacylase from Cupriavidus necator (strain ATCC 17699 / DSM 428 / KCTC 22496 / NCIMB 10442 / H16 / Stanier 337) (Ralstonia eutropha).